The sequence spans 340 residues: Agmatinase, mitochondrial (340 aa).

6 residues coordinate Mn(2+): histidine 150, aspartate 173, histidine 175, aspartate 177, aspartate 264, and aspartate 266.

It belongs to the arginase family. Agmatinase subfamily. The cofactor is Mn(2+).

It localises to the mitochondrion. It carries out the reaction agmatine + H2O = urea + putrescine. It participates in amine and polyamine biosynthesis; putrescine biosynthesis via agmatine pathway; putrescine from agmatine: step 1/1. This chain is Agmatinase, mitochondrial (AGMAT), found in Gallus gallus (Chicken).